A 418-amino-acid chain; its full sequence is Multidrug resistance protein MdtG (418 aa).

A run of 11 helical transmembrane segments spans residues 19 to 39 (IGCF…PLYV), 56 to 76 (LVFS…GGLA), 90 to 110 (LGMA…QFLI), 113 to 133 (ALLG…ATQI), 144 to 164 (TLST…GVLA), 171 to 191 (PVFF…LLFI), 222 to 242 (LFVT…ILTL), 251 to 271 (VANI…AALI), 288 to 308 (ILIA…FVQT), 317 to 337 (FLLG…LVYN), and 376 to 396 (AVFL…GLSL).

This sequence belongs to the major facilitator superfamily. DHA1 family. MdtG (TC 2.A.1.2.20) subfamily.

It is found in the cell inner membrane. This Enterobacter lignolyticus (strain SCF1) protein is Multidrug resistance protein MdtG.